The following is a 361-amino-acid chain: 3-dehydroquinate synthase (361 aa).

The protein belongs to the archaeal-type DHQ synthase family.

It catalyses the reaction 2-amino-2,3,7-trideoxy-D-lyxo-hept-6-ulosonate + NAD(+) + H2O = 3-dehydroquinate + NH4(+) + NADH + H(+). In terms of biological role, catalyzes the oxidative deamination and cyclization of 2-amino-3,7-dideoxy-D-threo-hept-6-ulosonic acid (ADH) to yield 3-dehydroquinate (DHQ), which is fed into the canonical shikimic pathway of aromatic amino acid biosynthesis. This Methanococcus maripaludis (strain C7 / ATCC BAA-1331) protein is 3-dehydroquinate synthase.